A 447-amino-acid chain; its full sequence is Hemogen (447 aa).

The interval Met-1–Leu-91 is disordered. The tract at residues Gln-7 to Glu-86 is necessary for nuclear localization. 2 stretches are compositionally biased toward basic and acidic residues: residues Gln-14–Val-25 and Arg-35–Glu-49. Over residues Glu-59–Gln-78 the composition is skewed to basic residues. A phosphoserine mark is found at Ser-89 and Ser-122. The interval Gln-137–Asn-156 is disordered. At Ser-200 the chain carries Phosphoserine. Disordered regions lie at residues Ala-210 to Pro-280 and Ala-306 to Glu-337. Thr-217 carries the phosphothreonine modification. A compositionally biased stretch (basic and acidic residues) spans Ala-306–Thr-316.

It localises to the nucleus. Regulates the proliferation and differentiation of hematopoietic cells. Overexpression block the TPA-induced megakaryocytic differentiation in the K562 cell model. May also prevent cell apoptosis through the activation of the nuclear factor-kappa B (NF-kB). This is Hemogen (HEMGN) from Bos taurus (Bovine).